Consider the following 434-residue polypeptide: UDP-N-acetylglucosamine 1-carboxyvinyltransferase (434 aa).

Position 22 to 23 (22 to 23) interacts with phosphoenolpyruvate; sequence KN. UDP-N-acetyl-alpha-D-glucosamine is bound at residue arginine 93. Cysteine 117 acts as the Proton donor in catalysis. At cysteine 117 the chain carries 2-(S-cysteinyl)pyruvic acid O-phosphothioketal. 2 residues coordinate UDP-N-acetyl-alpha-D-glucosamine: aspartate 307 and valine 329.

This sequence belongs to the EPSP synthase family. MurA subfamily.

Its subcellular location is the cytoplasm. The enzyme catalyses phosphoenolpyruvate + UDP-N-acetyl-alpha-D-glucosamine = UDP-N-acetyl-3-O-(1-carboxyvinyl)-alpha-D-glucosamine + phosphate. Its pathway is cell wall biogenesis; peptidoglycan biosynthesis. Its function is as follows. Cell wall formation. Adds enolpyruvyl to UDP-N-acetylglucosamine. The chain is UDP-N-acetylglucosamine 1-carboxyvinyltransferase from Coxiella burnetii (strain CbuG_Q212) (Coxiella burnetii (strain Q212)).